We begin with the raw amino-acid sequence, 197 residues long: Protein GrpE (197 aa).

Positions 1 to 39 (MSSKEQKTPEGQAPEEIIMDQHEEIEAVEPEASAEQVDP) are disordered.

It belongs to the GrpE family. In terms of assembly, homodimer.

The protein localises to the cytoplasm. Participates actively in the response to hyperosmotic and heat shock by preventing the aggregation of stress-denatured proteins, in association with DnaK and GrpE. It is the nucleotide exchange factor for DnaK and may function as a thermosensor. Unfolded proteins bind initially to DnaJ; upon interaction with the DnaJ-bound protein, DnaK hydrolyzes its bound ATP, resulting in the formation of a stable complex. GrpE releases ADP from DnaK; ATP binding to DnaK triggers the release of the substrate protein, thus completing the reaction cycle. Several rounds of ATP-dependent interactions between DnaJ, DnaK and GrpE are required for fully efficient folding. The polypeptide is Protein GrpE (Escherichia coli O45:K1 (strain S88 / ExPEC)).